The sequence spans 98 residues: NADH-ubiquinone oxidoreductase chain 4L (98 aa).

3 helical membrane-spanning segments follow: residues 1–21 (MSLV…GLLM), 29–49 (SLLC…IMIL), and 61–81 (IILL…LVMV).

Belongs to the complex I subunit 4L family. Core subunit of respiratory chain NADH dehydrogenase (Complex I) which is composed of 45 different subunits.

The protein resides in the mitochondrion inner membrane. It carries out the reaction a ubiquinone + NADH + 5 H(+)(in) = a ubiquinol + NAD(+) + 4 H(+)(out). Core subunit of the mitochondrial membrane respiratory chain NADH dehydrogenase (Complex I) which catalyzes electron transfer from NADH through the respiratory chain, using ubiquinone as an electron acceptor. Part of the enzyme membrane arm which is embedded in the lipid bilayer and involved in proton translocation. The polypeptide is NADH-ubiquinone oxidoreductase chain 4L (MT-ND4L) (Mogera wogura (Japanese mole)).